The primary structure comprises 151 residues: Regulatory protein RecX (151 aa).

This sequence belongs to the RecX family.

The protein localises to the cytoplasm. Functionally, modulates RecA activity. This chain is Regulatory protein RecX, found in Actinobacillus pleuropneumoniae serotype 5b (strain L20).